We begin with the raw amino-acid sequence, 471 residues long: Zinc finger protein 385B (471 aa).

The segment at 1–93 is required for induction of apoptosis; that stretch reads MNMANFLRGF…TGSTCHTTTL (93 aa). Residues 34 to 64 form a Matrin-type 1 zinc finger; sequence SFCEVCNIQLNSAAQAQVHSNGKSHRKRVKQ. 2 disordered regions span residues 50 to 92 and 175 to 275; these read QVHS…HTTT and HYKG…TVVE. Low complexity predominate over residues 76–92; sequence ASPSSNSSTGSTCHTTT. The tract at residues 94 to 471 is interaction with p53/TP53; sequence PALVRTPTLM…TPASILFAPY (378 aa). The Matrin-type 2 zinc-finger motif lies at 157–187; it reads ISCNVCQLRFNSDSQAEAHYKGSKHAKKVKA. The segment covering 206 to 220 has biased composition (polar residues); it reads ANPSCSITPITGNNS. The span at 230 to 250 shows a compositional bias: low complexity; it reads KASSSSQPSSSESGSFLLKSG. Over residues 260 to 269 the composition is skewed to polar residues; that stretch reads TSPSKSTNGA. The Matrin-type 3 zinc-finger motif lies at 282-316; it reads KKLLYCSLCKVAVNSLSQLEAHNTGSKHKTMVEAR. The tract at residues 318–340 is disordered; that stretch reads GAGPIKSYPRPGSRLKMQNGSKG. The Matrin-type 4 zinc-finger motif lies at 348-378; that stretch reads FHCEICDVHVNSEIQLKQHISSRRHKDRVAG.

Interacts with p53/TP53; the interaction is direct. In terms of tissue distribution, detected in germinal center of lymph node (at protein level). Expressed in spleen, lymph node and tonsil.

The protein localises to the nucleus. Its function is as follows. May play a role in p53/TP53-mediated apoptosis. This is Zinc finger protein 385B (ZNF385B) from Homo sapiens (Human).